A 633-amino-acid chain; its full sequence is MGIIKTLDSTISNKIAAGEVIERPQSVVKELVENAIDAKSTSITIEVEEAGLSKIKVTDNGSGILEEDLELMFRRHATSKIENEHDLFHIRSLGFRGEALASIASVSKVRVTTCHDGSIGRQIDVIDGETVNRTLAQARQGTEITVESLFYNTPARLKYVKSLHTELGKITDIINRFVISFPYIKFTLVADGRVLIASNGNGKMQEAMAVVYGMKIAQDLVEVNGRTGDYEVHGFIAKPEHTRSNRHYMSLFINGRYIKNFMLTKAILSGYHTLLPVGRYPILAINIVMDPALVDVNVHPTKQEVRLSKESQLMELIERLIKEKIWKQNLIPKVEKKKVLETFQQQKFEYDLLREHRDKTKQSDYSEQTAVNQIDEKFKEQHKTAQLDKQRVPDGESTQKTTGFISDSAAELDTTSEILPEKNESSDVIENISTDTSREKRKIPYMEIVGQVHGTYIIAQNEDGMFMIDQHAAQERIKYEYFKKQIGDVGLEMQSLLIPITVTLSKDEAINLNKINILLKDIGIHLEHFGGNDYIINDIPVWFPDNYEETVQELIDYALQHRQIDLNKFREETAIMMSCKKSIKANHYLRITDMNYLLEELAHTVEPYTCPHGRPIIIQFTTYELEKLFKRVM.

The protein belongs to the DNA mismatch repair MutL/HexB family.

Its function is as follows. This protein is involved in the repair of mismatches in DNA. It is required for dam-dependent methyl-directed DNA mismatch repair. May act as a 'molecular matchmaker', a protein that promotes the formation of a stable complex between two or more DNA-binding proteins in an ATP-dependent manner without itself being part of a final effector complex. This is DNA mismatch repair protein MutL from Macrococcus caseolyticus (strain JCSC5402) (Macrococcoides caseolyticum).